The chain runs to 115 residues: Guanylin (115 aa).

A signal peptide spans Met1–Gly21. Positions Val22–Asp100 are excised as a propeptide. Cystine bridges form between Cys69–Cys82, Cys104–Cys112, and Cys107–Cys115.

Belongs to the guanylin family.

It localises to the secreted. Its function is as follows. Endogenous activator of intestinal guanylate cyclase. It stimulates this enzyme through the same receptor binding region as the heat-stable enterotoxins. This is Guanylin (GUCA2A) from Notomys alexis (Spinifex hopping mouse).